The primary structure comprises 404 residues: uncharacterized protein (404 aa).

2 disordered regions span residues 261 to 307 and 320 to 340; these read VSTG…SPSL and KKSHSANDSEEFFREDDGGAD. Residues serine 267, serine 276, and serine 279 each carry the phosphoserine modification. Residues threonine 290 and threonine 293 each carry the phosphothreonine modification. Residues serine 304, serine 306, serine 324, serine 358, and serine 362 each carry the phosphoserine modification. The segment covering 320–336 has biased composition (basic and acidic residues); it reads KKSHSANDSEEFFREDD.

This is an uncharacterized protein from Homo sapiens (Human).